We begin with the raw amino-acid sequence, 352 residues long: Protein-glutamate methylesterase/protein-glutamine glutaminase 2 (352 aa).

A Response regulatory domain is found at 1-116 (MVVDDSAVVR…KQFLTDSADE (116 aa)). Asp-50 is subject to 4-aspartylphosphate. The CheB-type methylesterase domain occupies 162 to 352 (AQTTERIVAI…MAREIVTQLQ (191 aa)). Catalysis depends on residues Ser-174, His-200, and Asp-296.

This sequence belongs to the CheB family. In terms of processing, phosphorylated by CheA. Phosphorylation of the N-terminal regulatory domain activates the methylesterase activity.

The protein localises to the cytoplasm. It carries out the reaction [protein]-L-glutamate 5-O-methyl ester + H2O = L-glutamyl-[protein] + methanol + H(+). It catalyses the reaction L-glutaminyl-[protein] + H2O = L-glutamyl-[protein] + NH4(+). Involved in chemotaxis. Part of a chemotaxis signal transduction system that modulates chemotaxis in response to various stimuli. Catalyzes the demethylation of specific methylglutamate residues introduced into the chemoreceptors (methyl-accepting chemotaxis proteins or MCP) by CheR. Also mediates the irreversible deamidation of specific glutamine residues to glutamic acid. In Xanthomonas campestris pv. campestris (strain ATCC 33913 / DSM 3586 / NCPPB 528 / LMG 568 / P 25), this protein is Protein-glutamate methylesterase/protein-glutamine glutaminase 2.